The following is a 162-amino-acid chain: Interleukin-15 (162 aa).

Residues 1 to 29 form the signal peptide; it reads MRISKPHLRSISIQCYLCLLLNSHFLTEA. Positions 30-48 are excised as a propeptide; it reads GIHVFILGCFSAGLPKTEA. 2 disulfides stabilise this stretch: cysteine 83–cysteine 133 and cysteine 90–cysteine 136. Residue asparagine 127 is glycosylated (N-linked (GlcNAc...) asparagine).

The protein belongs to the IL-15/IL-21 family. In terms of tissue distribution, most abundant in placenta and skeletal muscle. It is also detected in the heart, lung, liver and kidney. IL15-S21AA is preferentially expressed in tissues such as testis and thymus.

The protein resides in the secreted. The protein localises to the cytoplasm. It localises to the nucleus. Functionally, cytokine that plays a major role in the development of inflammatory and protective immune responses to microbial invaders and parasites by modulating immune cells of both the innate and adaptive immune systems. Stimulates the proliferation of natural killer cells, T-cells and B-cells and promotes the secretion of several cytokines. In monocytes, induces the production of IL8 and monocyte chemotactic protein 1/CCL2, two chemokines that attract neutrophils and monocytes respectively to sites of infection. Unlike most cytokines, which are secreted in soluble form, IL15 is expressed in association with its high affinity IL15RA on the surface of IL15-producing cells and delivers signals to target cells that express IL2RB and IL2RG receptor subunits. Binding to its receptor triggers the phosphorylation of JAK1 and JAK3 and the recruitment and subsequent phosphorylation of signal transducer and activator of transcription-3/STAT3 and STAT5. In mast cells, induces the rapid tyrosine phosphorylation of STAT6 and thereby controls mast cell survival and release of cytokines such as IL4. This Homo sapiens (Human) protein is Interleukin-15 (IL15).